A 153-amino-acid polypeptide reads, in one-letter code: Ubiquitin/ISG15-conjugating enzyme E2 L6 (153 aa).

The UBC core domain occupies 2 to 149 (MASKRVAKEL…AEEFTLKFGV (148 aa)). Cys86 serves as the catalytic Glycyl thioester intermediate.

The protein belongs to the ubiquitin-conjugating enzyme family. Interacts with RNF19A, RNF19B and RNF144B. Interacts with FLT3 (tyrosine phosphorylated). In terms of processing, ISGylated.

The enzyme catalyses S-ubiquitinyl-[E1 ubiquitin-activating enzyme]-L-cysteine + [E2 ubiquitin-conjugating enzyme]-L-cysteine = [E1 ubiquitin-activating enzyme]-L-cysteine + S-ubiquitinyl-[E2 ubiquitin-conjugating enzyme]-L-cysteine.. It functions in the pathway protein modification; protein ubiquitination. Its function is as follows. Catalyzes the covalent attachment of ubiquitin or ISG15 to other proteins. Functions in the E6/E6-AP-induced ubiquitination of p53/TP53. Promotes ubiquitination and subsequent proteasomal degradation of FLT3. The protein is Ubiquitin/ISG15-conjugating enzyme E2 L6 (Ube2l6) of Mus musculus (Mouse).